The primary structure comprises 918 residues: Pre-pro-metalloprotease PrtV (918 aa).

The first 23 residues, 1-23 (MKTIKKTLLAAAIASFFSSGLYA), serve as a signal peptide directing secretion. Positions 24 to 105 (QTPIDLGVVN…QKGPHKARVF (82 aa)) are excised as a propeptide. H330 provides a ligand contact to Zn(2+). The active site involves E331. H334 contributes to the Zn(2+) binding site. Ca(2+) contacts are provided by I757, D782, D821, and D825. PKD domains lie at 758–835 (APVA…TIKV) and 855–918 (VTMW…KVKL). Residues 835-918 (VDTPNALPQA…VTTITIKVKL (84 aa)) constitute a propeptide that is removed on maturation.

This sequence belongs to the peptidase M6 family. Zn(2+) is required as a cofactor. Post-translationally, prtV is expressed as an inactive, multidomain, 102 kDa pre-pro-metalloprotease. To form a catalytically active protease, PrtV is first secreted, and then it undergoes N- and C-terminal cleavages during envelope translocation to yield a 81 kDa pro-metalloprotease. Outside the cell, the 81 kDa pro-metalloprotease undergoes an auto-cleavage. The two major products of autoproteolysis (37 kDa and 18 kDa) together form the so called 55 kDa active complex.

The protein resides in the secreted. Its activity is regulated as follows. Calcium plays an important structural role, providing stability to this protein in the cytoplasm. Outside the cell, the decrease of the calcium concentration triggers the autoproteolysis. PrtV activity is increased by 25 mM of Sr(2+) or Mg(2+) and to some extent by Ba(2+); however, Ba(2+) inhibits PrtV at higher concentrations. Completely inhibited by EDTA and 1,10-phenanthroline. Its function is as follows. Metalloprotease that exhibits a cytotoxic effect leading to cell death. In host tissues, it could play a role in pathogenesis by modulating the stability of the extracellular matrix components such as fibronectin and fibrinogen. Also able to cleave plasminogen. This chain is Pre-pro-metalloprotease PrtV, found in Vibrio cholerae serotype O1 (strain ATCC 39315 / El Tor Inaba N16961).